The following is a 196-amino-acid chain: Carnitine operon protein CaiE (196 aa).

The tract at residues 173 to 196 is disordered; that stretch reads TQPLRQMEENRPRLQGTTDVTPKR. Polar residues predominate over residues 187–196; the sequence is QGTTDVTPKR.

Belongs to the transferase hexapeptide repeat family.

It functions in the pathway amine and polyamine metabolism; carnitine metabolism. In terms of biological role, overproduction of CaiE stimulates the activity of CaiB and CaiD. The polypeptide is Carnitine operon protein CaiE (Shigella dysenteriae serotype 1 (strain Sd197)).